The primary structure comprises 894 residues: DNA mismatch repair protein MutS (894 aa).

Position 632–639 (632–639) interacts with ATP; sequence GPNMGGKS.

Belongs to the DNA mismatch repair MutS family.

This protein is involved in the repair of mismatches in DNA. It is possible that it carries out the mismatch recognition step. This protein has a weak ATPase activity. This Paraburkholderia phytofirmans (strain DSM 17436 / LMG 22146 / PsJN) (Burkholderia phytofirmans) protein is DNA mismatch repair protein MutS.